Here is a 193-residue protein sequence, read N- to C-terminus: Ion-translocating oxidoreductase complex subunit B (193 aa).

The segment at 1-26 (MSTMLIAVILLTLLALFFGVLLGFAA) is hydrophobic. A 4Fe-4S domain is found at 32–90 (EGNPIVDELEAILPQTQCGQCGYPGCRPYAEAIANGDKVNKCPPGGTATMEKLASLMGV). Residues Cys49, Cys52, Cys57, Cys73, Cys114, Cys117, Cys120, Cys124, Cys144, Cys147, Cys150, and Cys154 each contribute to the [4Fe-4S] cluster site. 4Fe-4S ferredoxin-type domains lie at 105–134 (KVAYIREDECIGCTKCIQACPVDAIIGAGK) and 136–164 (MHTVLTADCTGCDLCVEPCPVDCIDMVPV).

The protein belongs to the 4Fe4S bacterial-type ferredoxin family. RnfB subfamily. In terms of assembly, the complex is composed of six subunits: RnfA, RnfB, RnfC, RnfD, RnfE and RnfG. The cofactor is [4Fe-4S] cluster.

The protein localises to the cell inner membrane. Part of a membrane-bound complex that couples electron transfer with translocation of ions across the membrane. This is Ion-translocating oxidoreductase complex subunit B from Shewanella oneidensis (strain ATCC 700550 / JCM 31522 / CIP 106686 / LMG 19005 / NCIMB 14063 / MR-1).